We begin with the raw amino-acid sequence, 248 residues long: Granulin (248 aa).

It belongs to the polyhedrin family.

In terms of biological role, component of the virus occlusion bodies, which are large proteinaceous structures, that protect the virus from the outside environment for extended periods until they are ingested by insect larvae. The protein is Granulin of Cydia pomonella (Codling moth).